Consider the following 386-residue polypeptide: Enoyl-[acyl-carrier-protein] reductase 1, mitochondrial (386 aa).

A mitochondrion-targeting transit peptide spans 1–22 (MYSVLKQSIRPRLLATHNQFRT). The active-site Proton donor is the Tyr-79. NADP(+) contacts are provided by residues Asn-172, 199-202 (TSAV), 222-224 (RDR), 296-299 (YGGM), 321-323 (FWV), and Lys-381.

It belongs to the zinc-containing alcohol dehydrogenase family. Quinone oxidoreductase subfamily. As to quaternary structure, homodimer and heterodimer with ETR2.

Its subcellular location is the mitochondrion. The catalysed reaction is a 2,3-saturated acyl-[ACP] + NADP(+) = a (2E)-enoyl-[ACP] + NADPH + H(+). It catalyses the reaction (2E,4E)-hexadienoyl-CoA + NADPH + H(+) = (4E)-hexenoyl-CoA + NADP(+). The enzyme catalyses (2E)-hexenoyl-CoA + NADPH + H(+) = hexanoyl-CoA + NADP(+). Catalyzes the NADPH-dependent reduction of trans-2-enoyl thioesters in mitochondrial fatty acid synthesis (fatty acid synthesis type II). Fatty acid chain elongation in mitochondria uses acyl carrier protein (ACP) as an acyl group carrier, but the enzyme accepts both ACP and CoA thioesters as substrates in vitro. Required for respiration and the maintenance of the mitochondrial compartment. This chain is Enoyl-[acyl-carrier-protein] reductase 1, mitochondrial (ETR1), found in Candida tropicalis (Yeast).